An 812-amino-acid chain; its full sequence is Mitochondrial intermediate peptidase (812 aa).

The N-terminal 35 residues, 1–35 (MLKLLRPRPWVCNSCLNRVAFPKPYPVGSRSTRWL), are a transit peptide targeting the mitochondrion. The disordered stretch occupies residues 518 to 544 (STSEGGPAFGSPESAANDGMAASRGAS). Histidine 587 lines the Zn(2+) pocket. Glutamate 588 is a catalytic residue. Residues histidine 591 and histidine 594 each contribute to the Zn(2+) site.

It belongs to the peptidase M3 family. Requires Zn(2+) as cofactor.

The protein localises to the mitochondrion matrix. It carries out the reaction Release of an N-terminal octapeptide as second stage of processing of some proteins imported into the mitochondrion.. Its function is as follows. Cleaves proteins, imported into the mitochondrion, to their mature size. While most mitochondrial precursor proteins are processed to the mature form in one step by mitochondrial processing peptidase (MPP), the sequential cleavage by MIP of an octapeptide after initial processing by MPP is a required step for a subgroup of nuclear-encoded precursor proteins destined for the matrix or the inner membrane. The sequence is that of Mitochondrial intermediate peptidase (OCT1) from Pyricularia oryzae (strain 70-15 / ATCC MYA-4617 / FGSC 8958) (Rice blast fungus).